Here is a 571-residue protein sequence, read N- to C-terminus: Proline--tRNA ligase (571 aa).

It belongs to the class-II aminoacyl-tRNA synthetase family. ProS type 1 subfamily. Homodimer.

It localises to the cytoplasm. It catalyses the reaction tRNA(Pro) + L-proline + ATP = L-prolyl-tRNA(Pro) + AMP + diphosphate. Functionally, catalyzes the attachment of proline to tRNA(Pro) in a two-step reaction: proline is first activated by ATP to form Pro-AMP and then transferred to the acceptor end of tRNA(Pro). As ProRS can inadvertently accommodate and process non-cognate amino acids such as alanine and cysteine, to avoid such errors it has two additional distinct editing activities against alanine. One activity is designated as 'pretransfer' editing and involves the tRNA(Pro)-independent hydrolysis of activated Ala-AMP. The other activity is designated 'posttransfer' editing and involves deacylation of mischarged Ala-tRNA(Pro). The misacylated Cys-tRNA(Pro) is not edited by ProRS. The chain is Proline--tRNA ligase from Pseudomonas syringae pv. syringae (strain B728a).